Consider the following 256-residue polypeptide: Pimeloyl-[acyl-carrier protein] methyl ester esterase (256 aa).

Positions 15-242 (HLVLLHGWGL…AAHAPFISHP (228 aa)) constitute an AB hydrolase-1 domain. Substrate contacts are provided by residues Trp22, 82–83 (SL), and 143–147 (FLALQ). Catalysis depends on Ser82, which acts as the Nucleophile. Active-site residues include Asp207 and His235. His235 contacts substrate.

Belongs to the AB hydrolase superfamily. Carboxylesterase BioH family. Monomer.

It localises to the cytoplasm. It carries out the reaction 6-carboxyhexanoyl-[ACP] methyl ester + H2O = 6-carboxyhexanoyl-[ACP] + methanol + H(+). The protein operates within cofactor biosynthesis; biotin biosynthesis. In terms of biological role, the physiological role of BioH is to remove the methyl group introduced by BioC when the pimeloyl moiety is complete. It allows to synthesize pimeloyl-ACP via the fatty acid synthetic pathway through the hydrolysis of the ester bonds of pimeloyl-ACP esters. The protein is Pimeloyl-[acyl-carrier protein] methyl ester esterase of Escherichia coli O17:K52:H18 (strain UMN026 / ExPEC).